Reading from the N-terminus, the 842-residue chain is Translation initiation factor IF-2 (842 aa).

Residues 94-259 (QRSPEEIQAE…HGFQNPTGPV (166 aa)) form a disordered region. The span at 96 to 138 (SPEEIQAEQKRELDERRAAENAARDKVEAEVRQRNEEQARRQA) shows a compositional bias: basic and acidic residues. A compositionally biased stretch (low complexity) spans 139–148 (ADSAVAAPAP). Pro residues predominate over residues 149-159 (AAKPEPAPAAA). Residues 160 to 172 (PAPVVADAPASED) are compositionally biased toward low complexity. 2 stretches are compositionally biased toward basic and acidic residues: residues 173-202 (AAAR…RGEA) and 226-235 (TTDEESDGAR). Over residues 236–249 (RGRGGKGKLKKRNQ) the composition is skewed to basic residues. Positions 342 to 509 (SRAPVVTVMG…AVLLQAEILE (168 aa)) constitute a tr-type G domain. Positions 351-358 (GHVDHGKT) are G1. Residue 351–358 (GHVDHGKT) coordinates GTP. Residues 376-380 (GITQH) are G2. Residues 397 to 400 (DTPG) form a G3 region. GTP contacts are provided by residues 397-401 (DTPGH) and 451-454 (NKID). Residues 451 to 454 (NKID) form a G4 region. The segment at 487–489 (SAK) is G5.

It belongs to the TRAFAC class translation factor GTPase superfamily. Classic translation factor GTPase family. IF-2 subfamily.

The protein localises to the cytoplasm. Its function is as follows. One of the essential components for the initiation of protein synthesis. Protects formylmethionyl-tRNA from spontaneous hydrolysis and promotes its binding to the 30S ribosomal subunits. Also involved in the hydrolysis of GTP during the formation of the 70S ribosomal complex. This chain is Translation initiation factor IF-2, found in Pseudomonas putida (strain GB-1).